Consider the following 879-residue polypeptide: Alanine--tRNA ligase 1 (879 aa).

4 residues coordinate Zn(2+): His566, His570, Cys668, and His672.

It belongs to the class-II aminoacyl-tRNA synthetase family. Zn(2+) is required as a cofactor.

The protein localises to the cytoplasm. It catalyses the reaction tRNA(Ala) + L-alanine + ATP = L-alanyl-tRNA(Ala) + AMP + diphosphate. In terms of biological role, catalyzes the attachment of alanine to tRNA(Ala) in a two-step reaction: alanine is first activated by ATP to form Ala-AMP and then transferred to the acceptor end of tRNA(Ala). Also edits incorrectly charged Ser-tRNA(Ala) and Gly-tRNA(Ala) via its editing domain. The protein is Alanine--tRNA ligase 1 of Lachnoclostridium phytofermentans (strain ATCC 700394 / DSM 18823 / ISDg) (Clostridium phytofermentans).